The chain runs to 35 residues: Mu-theraphotoxin-Hd1a (35 aa).

Intrachain disulfides connect cysteine 2–cysteine 17, cysteine 9–cysteine 24, and cysteine 16–cysteine 31.

This sequence belongs to the neurotoxin 10 (Hwtx-1) family. 22 (Htx-4) subfamily. Expressed by the venom gland.

It localises to the secreted. In terms of biological role, gating-modifier toxin that reversibly and voltage-independently inhibits human Nav1.1/SCN1A and Nav1.7/SCN9A (IC(50)=111 nM). It also shows moderate inhibition on Nav1.2/SCN2A (1 uM inhibits current by 55%), Nav1.6/SCN8A (31%), Nav1.3/SCN5A (27%) and Nav1.4/SCN4A (23%). This toxin inhibits Nav1.7/SCN9A by interacting with the S3b-S4 paddle motif in channel domain II. This is Mu-theraphotoxin-Hd1a from Cyriopagopus doriae (Tarantula spider).